A 405-amino-acid chain; its full sequence is Acetate kinase (405 aa).

Asn7 contacts Mg(2+). Lys14 contacts ATP. Arg90 is a substrate binding site. Asp147 (proton donor/acceptor) is an active-site residue. Residues 207-211, 282-284, and 330-334 each bind ATP; these read HLGNG, DMR, and GVGEN. Glu383 is a Mg(2+) binding site.

The protein belongs to the acetokinase family. As to quaternary structure, homodimer. Requires Mg(2+) as cofactor. It depends on Mn(2+) as a cofactor.

The protein localises to the cytoplasm. It carries out the reaction acetate + ATP = acetyl phosphate + ADP. It participates in metabolic intermediate biosynthesis; acetyl-CoA biosynthesis; acetyl-CoA from acetate: step 1/2. Catalyzes the formation of acetyl phosphate from acetate and ATP. Can also catalyze the reverse reaction. The chain is Acetate kinase from Pseudothermotoga lettingae (strain ATCC BAA-301 / DSM 14385 / NBRC 107922 / TMO) (Thermotoga lettingae).